A 140-amino-acid chain; its full sequence is Large ribosomal subunit protein uL11 (140 aa).

It belongs to the universal ribosomal protein uL11 family. As to quaternary structure, part of the ribosomal stalk of the 50S ribosomal subunit. Interacts with L10 and the large rRNA to form the base of the stalk. L10 forms an elongated spine to which L12 dimers bind in a sequential fashion forming a multimeric L10(L12)X complex. Post-translationally, one or more lysine residues are methylated.

Its function is as follows. Forms part of the ribosomal stalk which helps the ribosome interact with GTP-bound translation factors. The protein is Large ribosomal subunit protein uL11 of Halothermothrix orenii (strain H 168 / OCM 544 / DSM 9562).